A 437-amino-acid chain; its full sequence is Probable indole-3-pyruvate monooxygenase YUCCA3 (437 aa).

FAD is bound at residue 41 to 46 (GAGPSG). 212–217 (GCGNSG) lines the NADP(+) pocket.

Belongs to the FMO family. It depends on FAD as a cofactor.

The enzyme catalyses indole-3-pyruvate + NADPH + O2 + H(+) = (indol-3-yl)acetate + CO2 + NADP(+) + H2O. Its pathway is plant hormone metabolism; auxin biosynthesis. Functionally, involved in auxin biosynthesis. Belongs to the set of redundant YUCCA genes probably responsible for auxin biosynthesis in roots. In Arabidopsis thaliana (Mouse-ear cress), this protein is Probable indole-3-pyruvate monooxygenase YUCCA3 (YUC3).